We begin with the raw amino-acid sequence, 1530 residues long: MALRDFCSVDGSDLFWEWNVTWNTSNPDFTKCFQNTVLVWVPCSYLWVCFPFYFLYLSHHDRGYIQMTHLNKAKTALGFLLWIVCWADLFYSFWERSMGKLLAPVFLVSPTLLGITMLLATFLIQIERRRGVQSSGIMLTFWLIALLCALAILRSKIMTALKEDARVDVFRDVTFYIYFSLVLIQLVLSCFSDRSPLFSETINDPNPCPESSASFLSRITFWWITGMMVQGYRQPLESTDLWSLNKEDTSEQVVPVLVKNWKKECAKSRKQPVKIVYSSKDPAKPKGSSKVDVNEEAEALIVKCPQKERDPSLFKVLYKTFGPYFLMSFLFKAVHDLMMFAGPEILKLLINFVNDKKAPEWQGYFYTALLFISACLQTLVLHQYFHICFVSGMRIKTAVIGAVYRKALVITNAARKSSTVGEIVNLMSVDAQRFMDLATYINMIWSAPLQVILALYLLWLNLGPSVLAGVAVMVLMVPLNAVMAMKTKTYQVAHMKSKDNRIKLMNEILNGIKVLKLYAWELAFKDKVLAIRQEELKVLKKSAYLAAVGTFTWVCTPFLVALSTFAVYVTVDENNILDAQKAFVSLALFNILRFPLNILPMVISSIVQASVSLKRLRVFLSHEDLDPDSIQRRPIKDAGATNSITVKNATFTWARNDPPTLHGITFSVPEGSLVAVVGQVGCGKSSLLSALLAEMDKVEGHVTVKGSVAYVPQQAWIQNISLRENILFGRQLQERYYKAVVEACALLPDLEILPSGDRTEIGEKGVNLSGGQKQRVSLARAVYCDSDVYLLDDPLSAVDAHVGKHIFENVIGPKGLLKNKTRLLVTHAISYLPQMDVIIVMSGGKISEMGSYQELLARDGAFAEFLRTYASAEQEQGQPEDGLAGVGGPGKEVKQMENGMLVTDTAGKQMQRQLSSSSSYSRDVSQHHTSTAELRKPGPTEETWKLVEADKAQTGQVKLSVYWDYMKAIGLFISFLSIFLFLCNHVASLVSNYWLSLWTDDPIVNGTQEHTQVRLSVYGALGISQGITVFGYSMAVSIGGIFASRRLHLDLLHNVLRSPISFFERTPSGNLVNRFSKELDTVDSMIPQVIKMFMGSLFNVIGACIIILLATPMAAVIIPPLGLIYFFVQRFYVASSRQLKRLESVSRSPVYSHFNETLLGVSVIRAFEEQERFIRQSDLKVDENQKAYYPSIVANRWLAVRLECVGNCIVLFASLFAVISRHSLSAGLVGLSVSYSLQVTTYLNWLVRMSSEMETNIVAVERLKEYSETEKEAPWQIQDMAPPKDWPQVGRVEFRDYGLRYREDLDLVLKHINVTIDGGEKVGIVGRTGAGKSSLTLGLFRIKESAEGEIIIDDINIAKIGLHDLRFKITIIPQDPVLFSGSLRMNLDPFSQYSDEEVWTSLELAHLKGFVSALPDKLNHECAEGGENLSVGQRQLVCLARALLRKTKILVLDEATAAVDLETDDLIQSTIRTQFDDCTVLTIAHRLNTIMDYTRVIVLDKGEIQEWGSPSDLLQQRGLFYSMAKDSGLV.

Residues 1–33 (MALRDFCSVDGSDLFWEWNVTWNTSNPDFTKCF) are Extracellular-facing. The N-linked (GlcNAc...) asparagine glycan is linked to N19. A helical membrane pass occupies residues 34 to 54 (QNTVLVWVPCSYLWVCFPFYF). At 55–74 (LYLSHHDRGYIQMTHLNKAK) the chain is on the cytoplasmic side. A helical transmembrane segment spans residues 75–95 (TALGFLLWIVCWADLFYSFWE). The Extracellular portion of the chain corresponds to 96 to 100 (RSMGK). Residues 101–121 (LLAPVFLVSPTLLGITMLLAT) form a helical membrane-spanning segment. The Cytoplasmic segment spans residues 122-133 (FLIQIERRRGVQ). A helical membrane pass occupies residues 134-154 (SSGIMLTFWLIALLCALAILR). At 155-172 (SKIMTALKEDARVDVFRD) the chain is on the extracellular side. The chain crosses the membrane as a helical span at residues 173–193 (VTFYIYFSLVLIQLVLSCFSD). Topologically, residues 194-316 (RSPLFSETIN…KERDPSLFKV (123 aa)) are cytoplasmic. Y277 bears the Phosphotyrosine mark. Phosphoserine is present on S289. The helical transmembrane segment at 317–337 (LYKTFGPYFLMSFLFKAVHDL) threads the bilayer. In terms of domain architecture, ABC transmembrane type-1 1 spans 325–608 (FLMSFLFKAV…LPMVISSIVQ (284 aa)). Topologically, residues 338 to 363 (MMFAGPEILKLLINFVNDKKAPEWQG) are extracellular. A helical transmembrane segment spans residues 364–384 (YFYTALLFISACLQTLVLHQY). Residues 385–440 (FHICFVSGMRIKTAVIGAVYRKALVITNAARKSSTVGEIVNLMSVDAQRFMDLATY) lie on the Cytoplasmic side of the membrane. Residues 441 to 461 (INMIWSAPLQVILALYLLWLN) form a helical membrane-spanning segment. The Extracellular portion of the chain corresponds to 462 to 464 (LGP). The helical transmembrane segment at 465–485 (SVLAGVAVMVLMVPLNAVMAM) threads the bilayer. Residues 486 to 547 (KTKTYQVAHM…VLKKSAYLAA (62 aa)) lie on the Cytoplasmic side of the membrane. K503 bears the N6-succinyllysine mark. Residues 548 to 568 (VGTFTWVCTPFLVALSTFAVY) traverse the membrane as a helical segment. At 569 to 590 (VTVDENNILDAQKAFVSLALFN) the chain is on the extracellular side. Residues 591-611 (ILRFPLNILPMVISSIVQASV) form a helical membrane-spanning segment. Residues 612 to 966 (SLKRLRVFLS…VKLSVYWDYM (355 aa)) are Cytoplasmic-facing. The ABC transporter 1 domain maps to 644 to 868 (ITVKNATFTW…DGAFAEFLRT (225 aa)). Position 678-685 (678-685 (GQVGCGKS)) interacts with ATP. The tract at residues 912 to 939 (RQLSSSSSYSRDVSQHHTSTAELRKPGP) is disordered. Phosphoserine is present on residues S915 and S930. The chain crosses the membrane as a helical span at residues 967–987 (KAIGLFISFLSIFLFLCNHVA). One can recognise an ABC transmembrane type-1 2 domain in the interval 974-1255 (SFLSIFLFLC…LVRMSSEMET (282 aa)). Residues 988-1024 (SLVSNYWLSLWTDDPIVNGTQEHTQVRLSVYGALGIS) are Extracellular-facing. N-linked (GlcNAc...) asparagine glycosylation occurs at N1005. Residues 1025–1045 (QGITVFGYSMAVSIGGIFASR) traverse the membrane as a helical segment. At 1046–1088 (RLHLDLLHNVLRSPISFFERTPSGNLVNRFSKELDTVDSMIPQ) the chain is on the cytoplasmic side. The helical transmembrane segment at 1089–1109 (VIKMFMGSLFNVIGACIIILL) threads the bilayer. Position 1110 (A1110) is a topological domain, extracellular. Residues 1111 to 1131 (TPMAAVIIPPLGLIYFFVQRF) traverse the membrane as a helical segment. Residues 1132-1202 (YVASSRQLKR…VANRWLAVRL (71 aa)) are Cytoplasmic-facing. Residues 1203–1223 (ECVGNCIVLFASLFAVISRHS) form a helical membrane-spanning segment. Residues 1224 to 1225 (LS) are Extracellular-facing. A helical transmembrane segment spans residues 1226–1246 (AGLVGLSVSYSLQVTTYLNWL). The Cytoplasmic segment spans residues 1247-1530 (VRMSSEMETN…YSMAKDSGLV (284 aa)). An ABC transporter 2 domain is found at 1292-1526 (VEFRDYGLRY…RGLFYSMAKD (235 aa)). 1326-1333 (GRTGAGKS) contacts ATP.

This sequence belongs to the ABC transporter superfamily. ABCC family. Conjugate transporter (TC 3.A.1.208) subfamily. In terms of tissue distribution, expressed in heart, spleen, lung, kidney, skeletal muscle, mammary gland and weaker in brain and liver.

Its subcellular location is the cell membrane. It is found in the basolateral cell membrane. It carries out the reaction ATP + H2O + xenobioticSide 1 = ADP + phosphate + xenobioticSide 2.. It catalyses the reaction an S-substituted glutathione(in) + ATP + H2O = an S-substituted glutathione(out) + ADP + phosphate + H(+). The catalysed reaction is sphing-4-enine 1-phosphate(in) + ATP + H2O = sphing-4-enine 1-phosphate(out) + ADP + phosphate + H(+). The enzyme catalyses leukotriene C4(in) + ATP + H2O = leukotriene C4(out) + ADP + phosphate + H(+). It carries out the reaction 17beta-estradiol 17-O-(beta-D-glucuronate)(in) + ATP + H2O = 17beta-estradiol 17-O-(beta-D-glucuronate)(out) + ADP + phosphate + H(+). It catalyses the reaction daunorubicin(in) + ATP + H2O = daunorubicin(out) + ADP + phosphate + H(+). The catalysed reaction is vincristine(in) + ATP + H2O = vincristine(out) + ADP + phosphate + H(+). The enzyme catalyses 2',3'-cGAMP(in) + ATP + H2O = 2',3'-cGAMP(out) + ADP + phosphate + H(+). It carries out the reaction S-[(2E,6E,10E)-geranylgeranyl]-L-glutathione(in) + ATP + H2O = S-[(2E,6E,10E)-geranylgeranyl]-L-glutathione(out) + ADP + phosphate + H(+). It catalyses the reaction prostaglandin A2-S-(R)-glutathione(in) + ATP + H2O = prostaglandin A2-S-(R)-glutathione(out) + ADP + phosphate + H(+). The catalysed reaction is prostaglandin A2-S-(S)-glutathione(in) + ATP + H2O = prostaglandin A2-S-(S)-glutathione(out) + ADP + phosphate + H(+). With respect to regulation, MK 571 inhibits sphingosine 1-phosphate and leukotriene C4 export. Functionally, mediates export of organic anions and drugs from the cytoplasm. Mediates ATP-dependent transport of glutathione and glutathione conjugates, leukotriene C4, estradiol-17-beta-o-glucuronide, methotrexate, antiviral drugs and other xenobiotics. Confers resistance to anticancer drugs by decreasing accumulation of drug in cells, and by mediating ATP- and GSH-dependent drug export. Hydrolyzes ATP with low efficiency. Catalyzes the export of sphingosine 1-phosphate from mast cells independently of their degranulation. Participates in inflammatory response by allowing export of leukotriene C4 from leukotriene C4-synthesizing cells. Mediates ATP-dependent, GSH-independent cyclic GMP-AMP (cGAMP) export. Thus, by limiting intracellular cGAMP concentrations negatively regulates the cGAS-STING pathway. Exports S-geranylgeranyl-glutathione (GGG) in lymphoid cells and stromal compartments of lymphoid organs. ABCC1 (via extracellular transport) with GGT5 (via GGG catabolism) establish GGG gradients within lymphoid tissues to position P2RY8-positive lymphocytes at germinal centers in lymphoid follicles and restrict their chemotactic transmigration from blood vessels to the bone marrow parenchyma. Mediates basolateral export of GSH-conjugated R- and S-prostaglandin A2 diastereomers in polarized epithelial cells. The polypeptide is Multidrug resistance-associated protein 1 (Bos taurus (Bovine)).